The chain runs to 476 residues: Bifunctional protein GlmU (476 aa).

The pyrophosphorylase stretch occupies residues 1–232 (MDNLAAIILA…PVEVMGINDR (232 aa)). UDP-N-acetyl-alpha-D-glucosamine is bound by residues 9–12 (LAAG), lysine 23, glutamine 75, and 80–81 (GT). Aspartate 105 lines the Mg(2+) pocket. UDP-N-acetyl-alpha-D-glucosamine is bound by residues glycine 142, glutamate 157, asparagine 172, and asparagine 230. A Mg(2+)-binding site is contributed by asparagine 230. Positions 233-253 (VQLAEAARHARRRIAEEHMLN) are linker. The tract at residues 254–476 (GVTLVDPAAT…EGWKLRKRDQ (223 aa)) is N-acetyltransferase. Residues arginine 353 and lysine 371 each coordinate UDP-N-acetyl-alpha-D-glucosamine. The Proton acceptor role is filled by histidine 383. UDP-N-acetyl-alpha-D-glucosamine is bound by residues tyrosine 386 and asparagine 397. Acetyl-CoA is bound by residues 406 to 407 (NY), serine 425, alanine 443, and arginine 460.

The protein in the N-terminal section; belongs to the N-acetylglucosamine-1-phosphate uridyltransferase family. It in the C-terminal section; belongs to the transferase hexapeptide repeat family. Homotrimer. Requires Mg(2+) as cofactor.

It localises to the cytoplasm. It carries out the reaction alpha-D-glucosamine 1-phosphate + acetyl-CoA = N-acetyl-alpha-D-glucosamine 1-phosphate + CoA + H(+). The enzyme catalyses N-acetyl-alpha-D-glucosamine 1-phosphate + UTP + H(+) = UDP-N-acetyl-alpha-D-glucosamine + diphosphate. Its pathway is nucleotide-sugar biosynthesis; UDP-N-acetyl-alpha-D-glucosamine biosynthesis; N-acetyl-alpha-D-glucosamine 1-phosphate from alpha-D-glucosamine 6-phosphate (route II): step 2/2. It functions in the pathway nucleotide-sugar biosynthesis; UDP-N-acetyl-alpha-D-glucosamine biosynthesis; UDP-N-acetyl-alpha-D-glucosamine from N-acetyl-alpha-D-glucosamine 1-phosphate: step 1/1. The protein operates within bacterial outer membrane biogenesis; LPS lipid A biosynthesis. Catalyzes the last two sequential reactions in the de novo biosynthetic pathway for UDP-N-acetylglucosamine (UDP-GlcNAc). The C-terminal domain catalyzes the transfer of acetyl group from acetyl coenzyme A to glucosamine-1-phosphate (GlcN-1-P) to produce N-acetylglucosamine-1-phosphate (GlcNAc-1-P), which is converted into UDP-GlcNAc by the transfer of uridine 5-monophosphate (from uridine 5-triphosphate), a reaction catalyzed by the N-terminal domain. The polypeptide is Bifunctional protein GlmU (Geobacter sulfurreducens (strain ATCC 51573 / DSM 12127 / PCA)).